Here is a 122-residue protein sequence, read N- to C-terminus: Large ribosomal subunit protein uL14 (122 aa).

It belongs to the universal ribosomal protein uL14 family. As to quaternary structure, part of the 50S ribosomal subunit. Forms a cluster with proteins L3 and L19. In the 70S ribosome, L14 and L19 interact and together make contacts with the 16S rRNA in bridges B5 and B8.

In terms of biological role, binds to 23S rRNA. Forms part of two intersubunit bridges in the 70S ribosome. The chain is Large ribosomal subunit protein uL14 from Sorangium cellulosum (strain So ce56) (Polyangium cellulosum (strain So ce56)).